A 412-amino-acid chain; its full sequence is Probable cystathionine gamma-synthase 2 (412 aa).

Pyridoxal 5'-phosphate contacts are provided by tyrosine 76, arginine 78, glycine 106, methionine 107, tyrosine 131, serine 226, and threonine 228. Lysine 229 is subject to N6-(pyridoxal phosphate)lysine.

It belongs to the trans-sulfuration enzymes family. Pyridoxal 5'-phosphate is required as a cofactor.

It carries out the reaction O-phospho-L-homoserine + L-cysteine = L,L-cystathionine + phosphate. The catalysed reaction is O-succinyl-L-homoserine + L-cysteine = L,L-cystathionine + succinate + H(+). The protein operates within amino-acid biosynthesis; L-methionine biosynthesis via de novo pathway; L-cystathionine from O-succinyl-L-homoserine: step 1/1. Catalyzes the first committed step of methionine (Met) biosynthesis. Catalyzes the formation of L-cystathionine from homoserine esters and L-cysteine, via a gamma-replacement reaction. The sequence is that of Probable cystathionine gamma-synthase 2 from Arabidopsis thaliana (Mouse-ear cress).